A 2136-amino-acid polypeptide reads, in one-letter code: Protein CELLULOSE SYNTHASE INTERACTIVE 3 (2136 aa).

42 ARM repeats span residues 27 to 66 (MEMD…LLGI), 71 to 111 (REAR…VLCK), 113 to 152 (KDLR…EVSS), 159 to 201 (HIGM…NLCG), 204 to 243 (DGYW…RLVL), 246 to 286 (CDSI…ALSA), 289 to 337 (DEAK…NVFG), 376 to 417 (PESS…SLYG), 419 to 458 (SSLS…GLCH), 461 to 500 (VGIW…ILTA), 503 to 542 (DDSK…NLCC), 545 to 584 (EEIR…KLVH), 586 to 618 (ADPA…HVLS), 619 to 663 (KASQ…DLFS), 666 to 705 (QDIC…ALSR), 711 to 750 (NNKK…NLLS), 752 to 791 (PDIA…QLLK), 811 to 848 (SLVD…FSYP), 849 to 887 (PWIA…RLCS), 936 to 980 (QLIT…GFLE), 1013 to 1041 (SVDA…YTSS), 1042 to 1083 (AQAE…TLAV), 1109 to 1149 (RGIN…SLVK), 1163 to 1204 (EDVR…RIAD), 1207 to 1247 (DTNK…VLFS), 1249 to 1288 (HELR…ELFD), 1290 to 1329 (ENIR…KLSS), 1333 to 1375 (SNTA…VVFS), 1377 to 1416 (KNIR…ILLD), 1418 to 1457 (EQHL…KLGK), 1460 to 1499 (VPRK…ILTN), 1518 to 1546 (AVLL…KQQT), 1547 to 1585 (LEAF…HFLT), 1587 to 1626 (EDFQ…KISA), 1628 to 1669 (WPKA…NILQ), 1670 to 1704 (YDAE…ALML), 1710 to 1750 (ASST…NNPR), 1790 to 1833 (SQHE…NFVM), 1836 to 1875 (RTNR…FLFS), 1921 to 1960 (PKLR…LLRH), 1969 to 2008 (VAKS…CLPG), and 2010 to 2035 (LTVN…QLTI). The 118-residue stretch at 1989–2106 (KTCPPRFHDK…VTEGEYSGSL (118 aa)) folds into the C2 domain.

As to quaternary structure, associates with cellulase synthase (CESA) complexes. Binds to cortical microtubules. Interacts with CESA3 and CESA6. As to expression, expressed in dark-grown hypocotyls, leaves (confined to vasculature and trichomes), stamen, pollen, developing siliques, and roots. Restricted in meristematic tissue of the shoot and root. Present in distinct punctae at the cell cortex, called microtubule-associated cellulose synthase compartments, that move with constant velocities of 10 to 3000 nm/min.

The protein resides in the cell membrane. It localises to the cytoplasm. It is found in the cytoskeleton. The protein localises to the endomembrane system. Regulator of the microtubular cytoskeleton. Microtubule-associated protein involved in the association of cellulase synthase (CESA) complexes (CSCs) and cortical microtubules. Promotes dynamics of CSCs in the plasma membrane in both microtubules-dependent and microtubules-independent manners. Regulates primary cell wall biosynthesis and cellulose microfibrils organization. The sequence is that of Protein CELLULOSE SYNTHASE INTERACTIVE 3 from Arabidopsis thaliana (Mouse-ear cress).